The sequence spans 301 residues: uncharacterized protein (301 aa).

An N-terminal signal peptide occupies residues 1–21; the sequence is MKIKLILVLIVFLTIVNVNNS. 4 N-linked (GlcNAc...) asparagine glycosylation sites follow: Asn19, Asn59, Asn102, and Asn180.

It is found in the secreted. This is an uncharacterized protein from Dictyostelium discoideum (Social amoeba).